Here is a 145-residue protein sequence, read N- to C-terminus: Protein ImpA (145 aa).

Active-site for autocatalytic cleavage activity residues include S64 and K101.

It belongs to the peptidase S24 family.

In terms of biological role, involved in UV protection and mutation. This is Protein ImpA from Escherichia coli.